A 37-amino-acid chain; its full sequence is Large ribosomal subunit protein bL36 (37 aa).

Zn(2+) is bound by residues C11, C14, C27, and H32.

It belongs to the bacterial ribosomal protein bL36 family. As to quaternary structure, part of the 50S ribosomal subunit. The cofactor is Zn(2+).

Binds the 23S rRNA. The polypeptide is Large ribosomal subunit protein bL36 (rpmJ) (Deinococcus radiodurans (strain ATCC 13939 / DSM 20539 / JCM 16871 / CCUG 27074 / LMG 4051 / NBRC 15346 / NCIMB 9279 / VKM B-1422 / R1)).